The primary structure comprises 500 residues: Protein O-glucosyltransferase 2 (500 aa).

Positions 1–22 are cleaved as a signal peptide; sequence MLRKLLLLLMSCIIFLTRRSKA. Residues 23–128 form a Filamin repeat; the sequence is AAAASASKTL…LVGKSPYVLR (106 aa). Residues Asn60 and Asn259 are each glycosylated (N-linked (GlcNAc...) asparagine). Positions 497 to 500 match the Prevents secretion from ER motif; sequence RDEL.

It belongs to the KDELC family.

It localises to the endoplasmic reticulum lumen. It carries out the reaction L-seryl-[EGF-like domain protein] + UDP-alpha-D-glucose = 3-O-(beta-D-glucosyl)-L-seryl-[EGF-like domain protein] + UDP + H(+). The enzyme catalyses L-seryl-[EGF-like domain protein] + UDP-alpha-D-xylose = 3-O-(beta-D-xylosyl)-L-seryl-[EGF-like domain protein] + UDP + H(+). It functions in the pathway protein modification; protein glycosylation. Its function is as follows. Protein glucosyltransferase that catalyzes the transfer of glucose from UDP-glucose to a serine residue within the consensus sequence peptide C-X-N-T-X-G-S-F-X-C. Can also catalyze the transfer of xylose from UDP-xylose but less efficiently. This chain is Protein O-glucosyltransferase 2 (poglut2), found in Danio rerio (Zebrafish).